Consider the following 240-residue polypeptide: MSKQRGTFSEVSLAQDPKWQQRKPKGNKSSISGTEQEIFQVELNLQNASLNHQGIDKIYDCQGLLPPPEKLTAEVLGIICIVLMATVLKTIVLIPFLEQNNSSPNARTQKARHCGHCPEEWITYSNSCYYIGKERRTWEESLQACASKNSSSLLCIDNEEEMKFLASILPSSWIGVFRNSSHHPWVTINGLAFKHEIKDSDHAERNCAMLHVRGLISDQCGSSRIIRRGFIMLTRLVLNS.

Over residues 1-12 (MSKQRGTFSEVS) the composition is skewed to polar residues. A disordered region spans residues 1-31 (MSKQRGTFSEVSLAQDPKWQQRKPKGNKSSI). The Cytoplasmic segment spans residues 1–70 (MSKQRGTFSE…CQGLLPPPEK (70 aa)). Residues 71-93 (LTAEVLGIICIVLMATVLKTIVL) form a helical; Signal-anchor for type II membrane protein membrane-spanning segment. The Extracellular portion of the chain corresponds to 94–240 (IPFLEQNNSS…IMLTRLVLNS (147 aa)). N-linked (GlcNAc...) asparagine glycosylation occurs at Asn-100. One can recognise a C-type lectin domain in the interval 116 to 230 (HCPEEWITYS…GSSRIIRRGF (115 aa)). The cysteines at positions 117 and 128 are disulfide-linked. N-linked (GlcNAc...) asparagine glycosylation is found at Asn-149 and Asn-179. Residues Cys-207 and Cys-220 are joined by a disulfide bond.

As to quaternary structure, can form disulfide-bonded heterodimer with CD94. As to expression, natural killer cells.

The protein localises to the membrane. Its function is as follows. Plays a role as a receptor for the recognition of MHC class I HLA-E molecules by NK cells and some cytotoxic T-cells. The protein is NKG2-E type II integral membrane protein (KLRC3) of Homo sapiens (Human).